A 152-amino-acid polypeptide reads, in one-letter code: Ribosome maturation factor RimP (152 aa).

Belongs to the RimP family.

Its subcellular location is the cytoplasm. Its function is as follows. Required for maturation of 30S ribosomal subunits. In Aeromonas salmonicida (strain A449), this protein is Ribosome maturation factor RimP.